Reading from the N-terminus, the 105-residue chain is Large ribosomal subunit protein bL21 (105 aa).

Belongs to the bacterial ribosomal protein bL21 family. As to quaternary structure, part of the 50S ribosomal subunit. Contacts protein L20.

Its function is as follows. This protein binds to 23S rRNA in the presence of protein L20. The protein is Large ribosomal subunit protein bL21 of Rickettsia peacockii (strain Rustic).